A 601-amino-acid polypeptide reads, in one-letter code: NADH-ubiquinone oxidoreductase chain 5 (601 aa).

15 helical membrane passes run 3 to 23 (LIMPFSIITLTILTIPIMMSY), 36 to 56 (VTSSVSYAFMTSMIPTMMFLL), 84 to 104 (FFSIIFVSVALFVTWSIMEFS), 114 to 134 (INQFFKYLLLFLITMMILVTA), 140 to 160 (LFIGWEGVGIMSFLLIGWWYG), 171 to 191 (AILYNRIGDIGFILTMAWLLL), 201 to 221 (IFMLKPTNLLPLLGLLVAAAG), 240 to 260 (TPVSALLHSSTMVVAGIFLLV), 272 to 292 (ILTMTLCLGAITTLFTAICAL), 324 to 346 (AFLHICTHAFFKAMLFMCSGSII), 365 to 385 (MPFTSSCLMIGSLALTGMPFL), 404 to 426 (NAWALLITLLATSFTASYSTRLI), 456 to 476 (LALGSIFAGFLISNYIPPLIT), 483 to 503 (LYMKLSALAVTIMGFMVAMGL), and 581 to 601 (LIKLYFMSFIISMTLATMLII).

This sequence belongs to the complex I subunit 5 family.

The protein localises to the mitochondrion inner membrane. The catalysed reaction is a ubiquinone + NADH + 5 H(+)(in) = a ubiquinol + NAD(+) + 4 H(+)(out). Functionally, core subunit of the mitochondrial membrane respiratory chain NADH dehydrogenase (Complex I) that is believed to belong to the minimal assembly required for catalysis. Complex I functions in the transfer of electrons from NADH to the respiratory chain. The immediate electron acceptor for the enzyme is believed to be ubiquinone. In Dasypus novemcinctus (Nine-banded armadillo), this protein is NADH-ubiquinone oxidoreductase chain 5 (MT-ND5).